Consider the following 117-residue polypeptide: Acidic phospholipase A2 PA-1G (117 aa).

Cystine bridges form between cysteine 11–cysteine 71, cysteine 27–cysteine 117, cysteine 29–cysteine 45, cysteine 44–cysteine 98, cysteine 51–cysteine 91, cysteine 60–cysteine 84, and cysteine 78–cysteine 89. Positions 28, 30, and 32 each coordinate Ca(2+). Histidine 48 is a catalytic residue. Aspartate 49 serves as a coordination point for Ca(2+). The active site involves aspartate 92.

The protein belongs to the phospholipase A2 family. Group I subfamily. D49 sub-subfamily. It depends on Ca(2+) as a cofactor. As to expression, expressed by the venom gland.

Its subcellular location is the secreted. It carries out the reaction a 1,2-diacyl-sn-glycero-3-phosphocholine + H2O = a 1-acyl-sn-glycero-3-phosphocholine + a fatty acid + H(+). Its function is as follows. PLA2 catalyzes the calcium-dependent hydrolysis of the 2-acyl groups in 3-sn-phosphoglycerides. The chain is Acidic phospholipase A2 PA-1G from Pseudechis australis (Mulga snake).